Here is a 399-residue protein sequence, read N- to C-terminus: Probable WRKY transcription factor 48 (399 aa).

2 stretches are compositionally biased toward basic and acidic residues: residues 1 to 11 (MEKKKEEDHHH) and 19 to 38 (KEIK…EQKQ). Disordered stretches follow at residues 1 to 57 (MEKK…TSSD) and 138 to 202 (AESS…KNQK). Residues 143-161 (VVNTTPTSPNSTSVSSSSN) show a composition bias toward low complexity. Over residues 162–171 (EAANDNNSGK) the composition is skewed to polar residues. Over residues 184–193 (QQEQKGTKPQ) the composition is skewed to low complexity. The segment at residues 215–280 (SDIDNLDDGY…YEGQHTHPFP (66 aa)) is a DNA-binding region (WRKY). A disordered region spans residues 361–399 (QASTSTSSSIRDHGLLQDILPSQIRSDTINTQTNEENKK). Residues 383-399 (QIRSDTINTQTNEENKK) show a composition bias toward polar residues.

It localises to the nucleus. Functionally, transcription factor. Interacts specifically with the W box (5'-(T)TGAC[CT]-3'), a frequently occurring elicitor-responsive cis-acting element. This is Probable WRKY transcription factor 48 (WRKY48) from Arabidopsis thaliana (Mouse-ear cress).